The primary structure comprises 237 residues: Tyrosine-protein kinase YwqD (237 aa).

Residue Y228 is modified to Phosphotyrosine; by autocatalysis.

It belongs to the CpsD/CapB family. Autophosphorylated in vitro, which inhibits ATPase activity. Dephosphorylated by YwqE in vitro.

It carries out the reaction L-tyrosyl-[protein] + ATP = O-phospho-L-tyrosyl-[protein] + ADP + H(+). Functionally, may be involved in the regulation of capsular polysaccharide biosynthesis. Autophosphorylates in vitro. Phosphorylates and activates in vitro two UDP-glucose dehydrogenases, YwqF and TuaD, as well as the DNA-binding proteins Ssb and SsbB. In Bacillus subtilis (strain 168), this protein is Tyrosine-protein kinase YwqD (ywqD).